A 107-amino-acid polypeptide reads, in one-letter code: Pyrimidine/purine nucleoside phosphorylase (107 aa).

The protein belongs to the nucleoside phosphorylase PpnP family.

The catalysed reaction is a purine D-ribonucleoside + phosphate = a purine nucleobase + alpha-D-ribose 1-phosphate. The enzyme catalyses adenosine + phosphate = alpha-D-ribose 1-phosphate + adenine. It carries out the reaction cytidine + phosphate = cytosine + alpha-D-ribose 1-phosphate. It catalyses the reaction guanosine + phosphate = alpha-D-ribose 1-phosphate + guanine. The catalysed reaction is inosine + phosphate = alpha-D-ribose 1-phosphate + hypoxanthine. The enzyme catalyses thymidine + phosphate = 2-deoxy-alpha-D-ribose 1-phosphate + thymine. It carries out the reaction uridine + phosphate = alpha-D-ribose 1-phosphate + uracil. It catalyses the reaction xanthosine + phosphate = alpha-D-ribose 1-phosphate + xanthine. Its function is as follows. Catalyzes the phosphorolysis of diverse nucleosides, yielding D-ribose 1-phosphate and the respective free bases. Can use uridine, adenosine, guanosine, cytidine, thymidine, inosine and xanthosine as substrates. Also catalyzes the reverse reactions. The chain is Pyrimidine/purine nucleoside phosphorylase from Aromatoleum aromaticum (strain DSM 19018 / LMG 30748 / EbN1) (Azoarcus sp. (strain EbN1)).